Reading from the N-terminus, the 444-residue chain is Glutamate--tRNA ligase 2 (444 aa).

The 'HIGH' region motif lies at 8–18 (PSPTGHLHAGN). The short motif at 241-245 (KLSKR) is the 'KMSKS' region element. An ATP-binding site is contributed by K244.

The protein belongs to the class-I aminoacyl-tRNA synthetase family. Glutamate--tRNA ligase type 1 subfamily. As to quaternary structure, monomer.

Its subcellular location is the cytoplasm. It catalyses the reaction tRNA(Glu) + L-glutamate + ATP = L-glutamyl-tRNA(Glu) + AMP + diphosphate. Catalyzes the attachment of glutamate to tRNA(Glu) in a two-step reaction: glutamate is first activated by ATP to form Glu-AMP and then transferred to the acceptor end of tRNA(Glu). The chain is Glutamate--tRNA ligase 2 from Acidiphilium cryptum (strain JF-5).